The following is a 520-amino-acid chain: CBL-interacting serine/threonine-protein kinase 18 (520 aa).

2 disordered regions span residues 1 to 29 (MAQALAQPPLVVTTVVPDPPPPPPPPHPK) and 48 to 67 (TDKDGNISPQSPRSPRSPRN). Residues 17-29 (PDPPPPPPPPHPK) show a composition bias toward pro residues. The span at 55–66 (SPQSPRSPRSPR) shows a compositional bias: low complexity. Positions 74-328 (YELGKLLGHG…IPEIMKNRWF (255 aa)) constitute a Protein kinase domain. Residues 80 to 88 (LGHGTFAKV) and Lys103 contribute to the ATP site. Residue Asp196 is the Proton acceptor of the active site. The tract at residues 214–243 (DFGLSAVAEQLRQDGLCHTFCGTPAYIAPE) is activation loop. Ser218 bears the Phosphoserine mark. Thr232 carries the phosphothreonine modification. The disordered stretch occupies residues 349-368 (EDEEEEASSSGRSSTVSESD). The segment covering 356 to 366 (SSSGRSSTVSE) has biased composition (low complexity). Positions 382-406 (PRPSSLNAFDIISFSSGFDLSGLFE) constitute an NAF domain. A PPI region spans residues 410 to 439 (GEGTRFVSGAPVSKIISKLEEIAKIVSFTV).

It belongs to the protein kinase superfamily. CAMK Ser/Thr protein kinase family. SNF1 subfamily. Interacts with CBL1 and CBL9. Mn(2+) serves as cofactor.

It catalyses the reaction L-seryl-[protein] + ATP = O-phospho-L-seryl-[protein] + ADP + H(+). The enzyme catalyses L-threonyl-[protein] + ATP = O-phospho-L-threonyl-[protein] + ADP + H(+). Functionally, CIPK serine-threonine protein kinases interact with CBL proteins. Binding of a CBL protein to the regulatory NAF domain of CIPK protein lead to the activation of the kinase in a calcium-dependent manner. This chain is CBL-interacting serine/threonine-protein kinase 18 (CIPK18), found in Arabidopsis thaliana (Mouse-ear cress).